The chain runs to 237 residues: Uridylate kinase (237 aa).

Residue 11–14 (KLSG) coordinates ATP. Glycine 53 contacts UMP. Glycine 54 and arginine 58 together coordinate ATP. UMP contacts are provided by residues aspartate 73 and 134–141 (TGNPFFTT). Residues threonine 161, tyrosine 167, and aspartate 170 each contribute to the ATP site.

It belongs to the UMP kinase family. As to quaternary structure, homohexamer.

It is found in the cytoplasm. The catalysed reaction is UMP + ATP = UDP + ADP. It participates in pyrimidine metabolism; CTP biosynthesis via de novo pathway; UDP from UMP (UMPK route): step 1/1. Its activity is regulated as follows. Inhibited by UTP. Catalyzes the reversible phosphorylation of UMP to UDP. The protein is Uridylate kinase of Nitrosomonas eutropha (strain DSM 101675 / C91 / Nm57).